A 326-amino-acid polypeptide reads, in one-letter code: Beta-ketoacyl-[acyl-carrier-protein] synthase III (326 aa).

Active-site residues include C112 and H251. Residues 252–256 (QANSR) are ACP-binding. N281 is a catalytic residue.

Belongs to the thiolase-like superfamily. FabH family. As to quaternary structure, homodimer.

Its subcellular location is the cytoplasm. The catalysed reaction is malonyl-[ACP] + acetyl-CoA + H(+) = 3-oxobutanoyl-[ACP] + CO2 + CoA. Its pathway is lipid metabolism; fatty acid biosynthesis. In terms of biological role, catalyzes the condensation reaction of fatty acid synthesis by the addition to an acyl acceptor of two carbons from malonyl-ACP. Catalyzes the first condensation reaction which initiates fatty acid synthesis and may therefore play a role in governing the total rate of fatty acid production. Possesses both acetoacetyl-ACP synthase and acetyl transacylase activities. Its substrate specificity determines the biosynthesis of branched-chain and/or straight-chain of fatty acids. This chain is Beta-ketoacyl-[acyl-carrier-protein] synthase III, found in Clostridium botulinum (strain Kyoto / Type A2).